The chain runs to 416 residues: Argininosuccinate synthase (416 aa).

ATP contacts are provided by residues 11-19 and Ala37; that span reads AYSGGLDTS. Tyr88 is an L-citrulline binding site. 2 positions are modified to phosphotyrosine: Tyr88 and Tyr114. 116–124 contacts ATP; sequence AHGATGKGN. Residues Thr120, Asn124, and Asp125 each coordinate L-aspartate. Asn124 provides a ligand contact to L-citrulline. The L-citrulline site is built by Arg128, Ser181, Ser190, Glu271, and Tyr283. Ser181 carries the phosphoserine modification.

This sequence belongs to the argininosuccinate synthase family. Homotetramer.

The protein resides in the cytoplasm. Its subcellular location is the cytosol. It catalyses the reaction L-citrulline + L-aspartate + ATP = 2-(N(omega)-L-arginino)succinate + AMP + diphosphate + H(+). It participates in amino-acid biosynthesis; L-arginine biosynthesis; L-arginine from L-ornithine and carbamoyl phosphate: step 2/3. Its pathway is nitrogen metabolism; urea cycle; (N(omega)-L-arginino)succinate from L-aspartate and L-citrulline: step 1/1. Functionally, one of the enzymes of the urea cycle, the metabolic pathway transforming neurotoxic amonia produced by protein catabolism into inocuous urea in the liver of ureotelic animals. Catalyzes the formation of arginosuccinate from aspartate, citrulline and ATP and together with ASL it is responsible for the biosynthesis of arginine in most body tissues. The chain is Argininosuccinate synthase from Gallus gallus (Chicken).